An 85-amino-acid chain; its full sequence is V-type proton ATPase subunit f (85 aa).

The next 2 helical transmembrane spans lie at 13-33 and 56-76; these read CTGL…LFSI and CLGA…QVIV.

As to quaternary structure, V-ATPase is a heteromultimeric enzyme composed of a peripheral catalytic V1 complex (components A to H) attached to an integral membrane V0 proton pore complex (components: a, c, c', c'', d, e, f and VOA1).

It localises to the endoplasmic reticulum membrane. Functionally, accessory component of the V0 complex of vacuolar(H+)-ATPase (V-ATPase), a multisubunit enzyme composed of a peripheral complex (V1) that hydrolyzes ATP and a membrane integral complex (V0) that translocates protons. V-ATPase is responsible for acidifying and maintaining the pH of intracellular compartments. In Schizosaccharomyces pombe (strain 972 / ATCC 24843) (Fission yeast), this protein is V-type proton ATPase subunit f.